The sequence spans 310 residues: Glycine-rich RNA-binding protein RZ1C (310 aa).

Residues 7–85 (SRIFVGGLSP…RVISVNRAEP (79 aa)) form the RRM domain. Ser15 bears the Phosphoserine mark. The disordered stretch occupies residues 82 to 120 (RAEPKLGRDDGESHGSRGGRDSGYSIAGKGSFGGGGGGG). Residues 83-101 (AEPKLGRDDGESHGSRGGR) show a composition bias toward basic and acidic residues. The span at 111–120 (GSFGGGGGGG) shows a compositional bias: gly residues. A CCHC-type zinc finger spans residues 128–143 (CFKCGRVGHWARDCPS). Residues 224-310 (RFAGGDRYSR…YPSSSTFDRY (87 aa)) are disordered. 2 stretches are compositionally biased toward basic and acidic residues: residues 226–236 (AGGDRYSRGSD) and 244–253 (DKARSFERDI). Positions 261-273 (RYGGGRAGGPIRG) are enriched in gly residues. A Phosphoserine modification is found at Ser295.

In terms of tissue distribution, expressed in roots, rosette and cauline leaves, stems, floral buds and flowers.

The protein resides in the nucleus. Its function is as follows. Binds RNA and DNA sequences non-specifically. May be involved in tolerance to cold stress. This Arabidopsis thaliana (Mouse-ear cress) protein is Glycine-rich RNA-binding protein RZ1C.